We begin with the raw amino-acid sequence, 124 residues long: NADPH-dependent 7-cyano-7-deazaguanine reductase (124 aa).

Cys-40 functions as the Thioimide intermediate in the catalytic mechanism. Asp-47 serves as the catalytic Proton donor. Residues 62–64 (VEL) and 81–82 (HE) each bind substrate.

This sequence belongs to the GTP cyclohydrolase I family. QueF type 1 subfamily.

The protein resides in the cytoplasm. It catalyses the reaction 7-aminomethyl-7-carbaguanine + 2 NADP(+) = 7-cyano-7-deazaguanine + 2 NADPH + 3 H(+). It participates in tRNA modification; tRNA-queuosine biosynthesis. Its function is as follows. Catalyzes the NADPH-dependent reduction of 7-cyano-7-deazaguanine (preQ0) to 7-aminomethyl-7-deazaguanine (preQ1). The polypeptide is NADPH-dependent 7-cyano-7-deazaguanine reductase (Wolinella succinogenes (strain ATCC 29543 / DSM 1740 / CCUG 13145 / JCM 31913 / LMG 7466 / NCTC 11488 / FDC 602W) (Vibrio succinogenes)).